The sequence spans 293 residues: Nucleotide-binding protein BA_5384/GBAA_5384/BAS5004 (293 aa).

ATP is bound at residue 14–21 (GMSGAGKT). 65–68 (DLRG) serves as a coordination point for GTP.

The protein belongs to the RapZ-like family.

Its function is as follows. Displays ATPase and GTPase activities. The polypeptide is Nucleotide-binding protein BA_5384/GBAA_5384/BAS5004 (Bacillus anthracis).